The primary structure comprises 636 residues: Multicopper oxidase CTB12 (636 aa).

The signal sequence occupies residues 1–23; that stretch reads MWSVRLYPLALTLLFQCVSPAAA. The Plastocyanin-like 1 domain maps to 62–168; the sequence is AGIGFREAIF…LYGAVVIAPD (107 aa). Residues His104 and His106 each contribute to the Cu cation site. Residue Asn136 is glycosylated (N-linked (GlcNAc...) asparagine). Residues His148 and His150 each contribute to the Cu cation site. Asn304 carries N-linked (GlcNAc...) asparagine glycosylation. One can recognise a Plastocyanin-like 2 domain in the interval 318–381; sequence LTFVNPGGLY…QEKARHVVRV (64 aa). A glycan (N-linked (GlcNAc...) asparagine) is linked at Asn472. The 128-residue stretch at 486-613 folds into the Plastocyanin-like 3 domain; it reads NVEDVPATEL…GGMGMVVLDG (128 aa). Positions 519, 522, and 524 each coordinate Cu cation. Asn576 carries an N-linked (GlcNAc...) asparagine glycan. Cu cation contacts are provided by His595, Cys596, His597, and His601.

Belongs to the multicopper oxidase family.

It participates in mycotoxin biosynthesis. In terms of biological role, multicopper oxidase; part of the gene cluster that mediates the biosynthesis of cercosporin, a light-activated, non-host-selective toxin. The perylenequinone chromophore of cercosporin absorbs light energy to attain an electronically-activated triplet state and produces active oxygen species such as the hydroxyl radical, superoxide, hydrogen peroxide or singlet oxygen upon reaction with oxygen molecules. These reactive oxygen species cause damage to various cellular components including lipids, proteins and nucleic acids. The first step of cercosporin biosynthesis is performed by the polyketide synthase CTB1 which catalyzes the formation of nor-toralactone. The starter unit acyltransferase (SAT) domain of CTB1 initiates polyketide extension by the selective utilization of acetyl-CoA, which is elongated to the heptaketide in the beta-ketoacyl synthase (KS) domain by successive condensations with six malonyl units introduced by the malonyl acyltransferase (MAT) domain. The product template (PT) domain catalyzes C4-C9 and C2-C11 aldol cyclizations and dehydrations to a trihydroxynaphthalene, which is thought to be delivered to the thioesterase (TE) domain for product release. The bifunctional enzyme CTB3 then methylates nor-toralactone to toralactone before conducting an unusual oxidative aromatic ring opening. The O-methyltransferase CTB2 further methylates the nascent OH-6 of the CBT3 product, blocking further oxidation at this site before the reductase CTB6 reduces the 2-oxopropyl ketone at position C7, giving naphthalene. The FAD-dependent monooxygenase CTB5 in concert with the multicopper oxidase CTB12 are responsible for homodimerization of naphthalene with CTB7 installing the dioxepine moiety, finally producing cercosporin. The fasciclin domain-containing protein CTB11 might act with CTB5 and CTB12 whereas the roles of CTB9 and CTB10 have still to be elucidated. The sequence is that of Multicopper oxidase CTB12 from Cercospora beticola (Sugarbeet leaf spot fungus).